Reading from the N-terminus, the 176-residue chain is ATP-dependent protease subunit HslV (176 aa).

The active site involves Thr2. The Na(+) site is built by Ala157, Cys160, and Thr163.

It belongs to the peptidase T1B family. HslV subfamily. In terms of assembly, a double ring-shaped homohexamer of HslV is capped on each side by a ring-shaped HslU homohexamer. The assembly of the HslU/HslV complex is dependent on binding of ATP.

It is found in the cytoplasm. The catalysed reaction is ATP-dependent cleavage of peptide bonds with broad specificity.. Allosterically activated by HslU binding. In terms of biological role, protease subunit of a proteasome-like degradation complex believed to be a general protein degrading machinery. This chain is ATP-dependent protease subunit HslV, found in Buchnera aphidicola subsp. Schizaphis graminum (strain Sg).